The chain runs to 272 residues: Tryptophan synthase alpha chain (272 aa).

Catalysis depends on proton acceptor residues glutamate 49 and aspartate 60.

Belongs to the TrpA family. As to quaternary structure, tetramer of two alpha and two beta chains.

It carries out the reaction (1S,2R)-1-C-(indol-3-yl)glycerol 3-phosphate + L-serine = D-glyceraldehyde 3-phosphate + L-tryptophan + H2O. It functions in the pathway amino-acid biosynthesis; L-tryptophan biosynthesis; L-tryptophan from chorismate: step 5/5. Its function is as follows. The alpha subunit is responsible for the aldol cleavage of indoleglycerol phosphate to indole and glyceraldehyde 3-phosphate. This is Tryptophan synthase alpha chain from Acidithiobacillus ferrooxidans (strain ATCC 23270 / DSM 14882 / CIP 104768 / NCIMB 8455) (Ferrobacillus ferrooxidans (strain ATCC 23270)).